Here is a 194-residue protein sequence, read N- to C-terminus: Ion-translocating oxidoreductase complex subunit B (194 aa).

The interval 1–26 is hydrophobic; sequence MSSILIAVIAISALALVFGLILGFAS. The 4Fe-4S domain maps to 32–90; it reads ESDPIVDQIDSILPQTQCGQCGYPGCKPYAEAIANGDTINKCPPGGQATIEKLADLMGV. Positions 49, 52, 57, 73, 114, 117, 120, 124, 144, 147, 150, and 154 each coordinate [4Fe-4S] cluster. 4Fe-4S ferredoxin-type domains lie at 105 to 134 and 135 to 164; these read KIAF…GGTK and ALHT…MIPV.

It belongs to the 4Fe4S bacterial-type ferredoxin family. RnfB subfamily. The complex is composed of six subunits: RnfA, RnfB, RnfC, RnfD, RnfE and RnfG. Requires [4Fe-4S] cluster as cofactor.

The protein localises to the cell inner membrane. In terms of biological role, part of a membrane-bound complex that couples electron transfer with translocation of ions across the membrane. The protein is Ion-translocating oxidoreductase complex subunit B of Aliivibrio salmonicida (strain LFI1238) (Vibrio salmonicida (strain LFI1238)).